The sequence spans 239 residues: Probable transcriptional regulatory protein BC_0539 (239 aa).

This sequence belongs to the TACO1 family. YeeN subfamily.

It is found in the cytoplasm. The polypeptide is Probable transcriptional regulatory protein BC_0539 (Bacillus cereus (strain ATCC 14579 / DSM 31 / CCUG 7414 / JCM 2152 / NBRC 15305 / NCIMB 9373 / NCTC 2599 / NRRL B-3711)).